The following is a 347-amino-acid chain: 4-hydroxy-2-oxovalerate aldolase (347 aa).

A Pyruvate carboxyltransferase domain is found at 2–252 (ILISDATLRD…DTRTTFEHVM (251 aa)). 10 to 11 (RD) lines the substrate pocket. Asp11 lines the Mn(2+) pocket. The active-site Proton acceptor is the His14. Substrate is bound by residues Ser164 and His191. Mn(2+) contacts are provided by His191 and His193.

Belongs to the 4-hydroxy-2-oxovalerate aldolase family.

The catalysed reaction is (S)-4-hydroxy-2-oxopentanoate = acetaldehyde + pyruvate. This chain is 4-hydroxy-2-oxovalerate aldolase (mhpE), found in Burkholderia thailandensis (strain ATCC 700388 / DSM 13276 / CCUG 48851 / CIP 106301 / E264).